The primary structure comprises 254 residues: Probable phosphatase Sbal223_2880 (254 aa).

Positions 8, 10, 16, 41, 74, 102, 132, 193, and 195 each coordinate Zn(2+).

This sequence belongs to the PHP family. Zn(2+) is required as a cofactor.

The sequence is that of Probable phosphatase Sbal223_2880 from Shewanella baltica (strain OS223).